A 1073-amino-acid chain; its full sequence is Semaphorin-6D (1073 aa).

Positions M1–A20 are cleaved as a signal peptide. At V21–N662 the chain is on the extracellular side. In terms of domain architecture, Sema spans D27 to L512. N-linked (GlcNAc...) asparagine glycosylation is present at N51. 4 disulfide bridges follow: C108-C118, C136-C145, C259-C370, and C284-C329. An N-linked (GlcNAc...) asparagine glycan is attached at N283. N-linked (GlcNAc...) asparagine glycans are attached at residues N435 and N461. 4 disulfides stabilise this stretch: C477/C506, C515/C533, C521/C568, and C525/C541. The PSI domain occupies R514–H569. N631 carries an N-linked (GlcNAc...) asparagine glycan. A helical membrane pass occupies residues V663 to V683. The Cytoplasmic segment spans residues Y684–Y1073. Phosphoserine is present on residues S723, S734, and S744. Disordered stretches follow at residues R745–P825, T839–R876, P919–G986, and L1021–Y1073. T773 is subject to Phosphothreonine. Basic and acidic residues predominate over residues S790–P806. Phosphoserine is present on residues S931, S957, and S983. Positions S931–T942 are enriched in polar residues. Composition is skewed to polar residues over residues L1021–L1037 and V1059–Y1073.

Belongs to the semaphorin family. As to expression, expressed in brain and lung.

The protein resides in the cell membrane. Functionally, shows growth cone collapsing activity on dorsal root ganglion (DRG) neurons in vitro. May be a stop signal for the DRG neurons in their target areas, and possibly also for other neurons. May also be involved in the maintenance and remodeling of neuronal connections. Ligand of TREM2 with PLXNA1 as coreceptor in dendritic cells, plays a role in the generation of immune responses and skeletal homeostasis. The sequence is that of Semaphorin-6D (Sema6d) from Mus musculus (Mouse).